Consider the following 379-residue polypeptide: S-(hydroxymethyl)glutathione dehydrogenase (379 aa).

Zn(2+) is bound at residue Cys-47. Residue His-48 participates in NAD(+) binding. Zn(2+) contacts are provided by His-69, Glu-70, Cys-99, Cys-102, Cys-105, Cys-113, and Cys-176. NAD(+)-binding positions include 201-206, Asp-225, and 296-298; these read GAGCIG and IGV.

It belongs to the zinc-containing alcohol dehydrogenase family. Class-III subfamily. Zn(2+) is required as a cofactor.

It carries out the reaction a primary alcohol + NAD(+) = an aldehyde + NADH + H(+). The catalysed reaction is a secondary alcohol + NAD(+) = a ketone + NADH + H(+). It catalyses the reaction S-(hydroxymethyl)glutathione + NADP(+) = S-formylglutathione + NADPH + H(+). The enzyme catalyses S-(hydroxymethyl)glutathione + NAD(+) = S-formylglutathione + NADH + H(+). It carries out the reaction S-nitrosoglutathione + NADH + H(+) = S-(hydroxysulfenamide)glutathione + NAD(+). Its function is as follows. Oxidizes long-chain alcohols and, in the presence of glutathione, is able to oxidize formaldehyde. Also acts as a S-nitroso-glutathione reductase by catalyzing the NADH-dependent reduction of S-nitrosoglutathione, thereby regulating protein S-nitrosylation. In Komagataella pastoris (Yeast), this protein is S-(hydroxymethyl)glutathione dehydrogenase (FLD1).